Consider the following 241-residue polypeptide: Small ribosomal subunit protein eS4 (241 aa).

Positions 43 to 105 (IPLVMVLRDI…INKTFRVLQD (63 aa)) constitute an S4 RNA-binding domain.

It belongs to the eukaryotic ribosomal protein eS4 family.

This Methanosphaera stadtmanae (strain ATCC 43021 / DSM 3091 / JCM 11832 / MCB-3) protein is Small ribosomal subunit protein eS4.